Here is a 622-residue protein sequence, read N- to C-terminus: Phosphoenolpyruvate carboxykinase [GTP] (622 aa).

Substrate contacts are provided by residues Arg86 and 220–222 (YGG). Lys229 and His248 together coordinate Mn(2+). Position 270 (Ser270) interacts with substrate. A GTP-binding site is contributed by 271–276 (MCGKTS). Cys272 is an active-site residue. Asp289 lines the Mn(2+) pocket. Residues 360-374 (ENHSGKWWRGKKDSE) are compositionally biased toward basic and acidic residues. The interval 360–381 (ENHSGKWWRGKKDSEGNEISPS) is disordered. 384–386 (NAR) lines the substrate pocket. The GTP site is built by Arg386 and Arg418.

Belongs to the phosphoenolpyruvate carboxykinase [GTP] family. It depends on Mn(2+) as a cofactor.

It is found in the cytoplasm. The enzyme catalyses oxaloacetate + GTP = phosphoenolpyruvate + GDP + CO2. Its pathway is carbohydrate biosynthesis; gluconeogenesis. In terms of biological role, catalyzes the conversion of oxaloacetate (OAA) to phosphoenolpyruvate (PEP), the rate-limiting step in the metabolic pathway that produces glucose from lactate and other precursors derived from the citric acid cycle. The protein is Phosphoenolpyruvate carboxykinase [GTP] of Thermococcus sibiricus (strain DSM 12597 / MM 739).